The following is a 133-amino-acid chain: Large ribosomal subunit protein uL22c (133 aa).

Belongs to the universal ribosomal protein uL22 family. As to quaternary structure, part of the 50S ribosomal subunit.

It localises to the plastid. Its subcellular location is the chloroplast. Its function is as follows. This protein binds specifically to 23S rRNA. In terms of biological role, the globular domain of the protein is located near the polypeptide exit tunnel on the outside of the subunit, while an extended beta-hairpin is found that lines the wall of the exit tunnel in the center of the 70S ribosome. This chain is Large ribosomal subunit protein uL22c (rpl22), found in Manihot esculenta (Cassava).